The sequence spans 141 residues: Hemoglobin subunit alpha (141 aa).

Residues 2–141 (AFTACEKQTI…ICQELSSRYR (140 aa)) enclose the Globin domain. His59 provides a ligand contact to O2. His88 lines the heme b pocket.

It belongs to the globin family. In terms of assembly, heterotetramer of two alpha chains and two beta chains. In terms of tissue distribution, red blood cells.

In terms of biological role, involved in oxygen transport from gills to the various peripheral tissues. This chain is Hemoglobin subunit alpha (HBA), found in Mustelus griseus (Spotless smooth-hound).